The chain runs to 246 residues: Probable septum site-determining protein MinC (246 aa).

This sequence belongs to the MinC family. Interacts with MinD and FtsZ.

Functionally, cell division inhibitor that blocks the formation of polar Z ring septums. Rapidly oscillates between the poles of the cell to destabilize FtsZ filaments that have formed before they mature into polar Z rings. Prevents FtsZ polymerization. This chain is Probable septum site-determining protein MinC, found in Pseudomonas savastanoi pv. phaseolicola (strain 1448A / Race 6) (Pseudomonas syringae pv. phaseolicola (strain 1448A / Race 6)).